The following is a 343-amino-acid chain: MKIKALSKLKPEEGIWMTEVEKPEMGHNDILIRIKKTAICGTDVHIYNWDEWSQKTIPVPMVVGHEYVGEVVGIGQEVRGFEIGDRVSGEGHITCGHCRNCRGGRTHLCRNTTGVGVNRTGAFSEFLVIPAFNAFKIPAGISDDLASIFDPFGNAVHTALSFDLVGEDVLITGAGPIGIMAAAVAKHVGARHVVITDVNEFRLDLARKMGVTRAVNVMNEKLEDVMSDLGMTEGFDVGLEMSGNPSAFNSMLTNMNHGGKISLLGIPPSDMAVDWNQVIFKGLVIKGIYGREMFETWYKMASLIQSGLDLTPIITHHYKIDDFQAGFDMMRSGMSGKVILDWE.

C40 provides a ligand contact to Zn(2+). Catalysis depends on charge relay system residues T42 and H45. H65, E66, C95, C98, C101, and C109 together coordinate Zn(2+). Residues I177, D197, R202, 264–266 (LGI), and 288–289 (IY) contribute to the NAD(+) site.

Belongs to the zinc-containing alcohol dehydrogenase family. As to quaternary structure, homotetramer. Zn(2+) serves as cofactor.

The protein localises to the cytoplasm. It carries out the reaction L-threonine + NAD(+) = (2S)-2-amino-3-oxobutanoate + NADH + H(+). It participates in amino-acid degradation; L-threonine degradation via oxydo-reductase pathway; glycine from L-threonine: step 1/2. Functionally, catalyzes the NAD(+)-dependent oxidation of L-threonine to 2-amino-3-ketobutyrate. The protein is L-threonine 3-dehydrogenase of Aliivibrio salmonicida (strain LFI1238) (Vibrio salmonicida (strain LFI1238)).